Here is a 390-residue protein sequence, read N- to C-terminus: GTPase Obg (390 aa).

The Obg domain occupies 1-159; that stretch reads MKFVDEASIL…RDLLLELMLL (159 aa). The interval 127 to 147 is disordered; sequence NTRFKSSVNRTPRQKTNGTPG. Residues 129 to 145 show a composition bias toward polar residues; it reads RFKSSVNRTPRQKTNGT. Residues 160-333 form the OBG-type G domain; sequence ADVGMLGMPN…LCWDVMTFII (174 aa). GTP contacts are provided by residues 166-173, 191-195, 213-216, 283-286, and 314-316; these read GMPNAGKS, FTTLV, DIPG, NKID, and SAA. 2 residues coordinate Mg(2+): S173 and T193.

The protein belongs to the TRAFAC class OBG-HflX-like GTPase superfamily. OBG GTPase family. Monomer. Mg(2+) is required as a cofactor.

It localises to the cytoplasm. Its function is as follows. An essential GTPase which binds GTP, GDP and possibly (p)ppGpp with moderate affinity, with high nucleotide exchange rates and a fairly low GTP hydrolysis rate. Plays a role in control of the cell cycle, stress response, ribosome biogenesis and in those bacteria that undergo differentiation, in morphogenesis control. This Salmonella paratyphi A (strain ATCC 9150 / SARB42) protein is GTPase Obg.